A 987-amino-acid polypeptide reads, in one-letter code: AP3-complex subunit beta-A (987 aa).

The interval 586–662 (QDQLSDLDKQ…ISETSVSADQ (77 aa)) is disordered. Acidic residues predominate over residues 603–613 (DGSEESSETGD). Residues 614 to 631 (ENGSSDYDSESSNGSDFS) show a composition bias toward low complexity.

Belongs to the adaptor complexes large subunit family. In terms of assembly, adaptor protein complex 3 (AP-3) is a heterotetramer composed of two large adaptins (delta-type subunit and beta-type subunit), a medium adaptin (mu-type subunit) and a small adaptin (sigma-type subunit).

The protein localises to the cytoplasm. It localises to the golgi apparatus. The protein resides in the cytoplasmic vesicle membrane. In terms of biological role, part of the AP-3 complex, an adaptor-related complex which seems to be clathrin-associated. The complex is associated with the Golgi region as well as more peripheral structures. It facilitates the budding of vesicles from the Golgi membrane and may be directly involved in trafficking to the vacuole. It also function in maintaining the identity of lytic vacuoles and in regulating the transition between storage and lytic vacuoles. The protein is AP3-complex subunit beta-A (AP3BA) of Arabidopsis thaliana (Mouse-ear cress).